The chain runs to 309 residues: Serpentine receptor class gamma-47 (309 aa).

Transmembrane regions (helical) follow at residues 22 to 42, 140 to 160, 190 to 210, 230 to 250, and 272 to 292; these read IVQM…LFLF, FKLY…VLPL, IYSS…IFYI, LITL…ILMA, and ISSD…DVGI.

This sequence belongs to the nematode receptor-like protein srg family.

The protein resides in the membrane. The polypeptide is Serpentine receptor class gamma-47 (srg-47) (Caenorhabditis elegans).